The primary structure comprises 421 residues: Replication-associated recombination protein A (421 aa).

Residue 45 to 52 coordinates ATP; it reads GPPGIGKT.

It belongs to the AAA ATPase family. RarA/MGS1/WRNIP1 subfamily. As to quaternary structure, homotetramer. Interacts with single-stranded binding protein SsbA. May interact with PriA.

It is found in the cytoplasm. Its subcellular location is the nucleoid. SsDNA-dependent ATP hydrolysis is stimulated by single-stranded binding protein SsbA but not by SsbB; in the presence of SsbB, ssDNA secondary structure is removed and RarA's ATPase activity is decreased. The C-terminal 9 residues of SsbA are sufficient to stimulate ATPase activity. Functionally, plays a role in recombination-dependent DNA replication. Positively affects the formation of RecA threads during response to DNA damage, directly or indirectly counteracting the negative RecA modulators RecX and RecU. Stabilizes a RecA-ssDNA complex. In vitro, in the presence of SsbA, inhibits PriA-dependent DNA replication restart of both leading and lagging strands; elongation is insensitive to RarA. Plays a role in response to DNA damage, localizes to the replication fork but also to DNA elsewhere in the cell. Probably required for repair of single-stranded nicks generated by H(2)O(2). Epistatic to RecA, partially represses deletions of the error-prone translesion DNA polymerases (dinB1 and dinB2), genetically interacts with replicative helicase loaders dnaB and dnaD. Epistatic to recF and recO mutations upon DNA damage. A DNA-dependent ATPase stimulated by hairpin structures in circular single-stranded (ss)DNA or ssDNA-dsDNA junctions, by blunt end and 5'-tailed dsDNA and by single-stranded binding protein SsbA protein bound to ssDNA. Preferentially binds ssDNA and replication-fork structures; SsbA stimulates binding to ssDNA. Addition of ATP to the protein has no visible effect in vitro. The chain is Replication-associated recombination protein A from Bacillus subtilis (strain 168).